Consider the following 129-residue polypeptide: NADH-quinone oxidoreductase subunit K 2 (129 aa).

Helical transmembrane passes span 3–23 (LAYPAVLSALLFSTGLYGVLA), 28–48 (ILVLMSVELMLNAVNLNLVAF), and 68–88 (LFTIAIAAAEIGIGLAIVLAV). The disordered stretch occupies residues 98–129 (DKLRDTAEGPEPDGPGTDGSAPTAAEKAEATA). Positions 111 to 122 (GPGTDGSAPTAA) are enriched in low complexity.

Belongs to the complex I subunit 4L family. As to quaternary structure, NDH-1 is composed of 14 different subunits. Subunits NuoA, H, J, K, L, M, N constitute the membrane sector of the complex.

Its subcellular location is the cell membrane. It carries out the reaction a quinone + NADH + 5 H(+)(in) = a quinol + NAD(+) + 4 H(+)(out). Its function is as follows. NDH-1 shuttles electrons from NADH, via FMN and iron-sulfur (Fe-S) centers, to quinones in the respiratory chain. The immediate electron acceptor for the enzyme in this species is believed to be a menaquinone. Couples the redox reaction to proton translocation (for every two electrons transferred, four hydrogen ions are translocated across the cytoplasmic membrane), and thus conserves the redox energy in a proton gradient. The sequence is that of NADH-quinone oxidoreductase subunit K 2 from Streptomyces avermitilis (strain ATCC 31267 / DSM 46492 / JCM 5070 / NBRC 14893 / NCIMB 12804 / NRRL 8165 / MA-4680).